The primary structure comprises 478 residues: tRNA modification GTPase MnmE (478 aa).

The (6S)-5-formyl-5,6,7,8-tetrahydrofolate site is built by Arg36, Glu94, and Lys133. The TrmE-type G domain occupies 230–402 (GIHVVLAGRP…LVETLCAKVG (173 aa)). K(+) is bound at residue Asn240. Residues 240 to 245 (NAGKSS), 259 to 265 (TDVAGTT), and 284 to 287 (DTAG) each bind GTP. Ser244 is a Mg(2+) binding site. 3 residues coordinate K(+): Thr259, Val261, and Thr264. Thr265 provides a ligand contact to Mg(2+). (6S)-5-formyl-5,6,7,8-tetrahydrofolate is bound at residue Lys478.

It belongs to the TRAFAC class TrmE-Era-EngA-EngB-Septin-like GTPase superfamily. TrmE GTPase family. In terms of assembly, homodimer. Heterotetramer of two MnmE and two MnmG subunits. K(+) is required as a cofactor.

It is found in the cytoplasm. Exhibits a very high intrinsic GTPase hydrolysis rate. Involved in the addition of a carboxymethylaminomethyl (cmnm) group at the wobble position (U34) of certain tRNAs, forming tRNA-cmnm(5)s(2)U34. The chain is tRNA modification GTPase MnmE from Psychrobacter arcticus (strain DSM 17307 / VKM B-2377 / 273-4).